A 185-amino-acid chain; its full sequence is Gastrokine-1 (185 aa).

The signal sequence occupies residues 1–20; sequence MKFTIVFAGLLGVFLAPALA. Positions 54–150 constitute a BRICHOS domain; that stretch reads NNGWDSWNSI…MCRGIPTYMA (97 aa). Cysteines 81 and 142 form a disulfide.

Belongs to the gastrokine family. In terms of tissue distribution, expressed in stomach (at protein level). No expression is detected in cancer tissue or gastric cancer cell lines.

The protein resides in the secreted. It is found in the cytoplasmic granule. The protein localises to the golgi apparatus. In terms of biological role, has mitogenic activity and may be involved in maintaining the integrity of the gastric mucosal epithelium. The protein is Gastrokine-1 (GKN1) of Homo sapiens (Human).